We begin with the raw amino-acid sequence, 335 residues long: Ketol-acid reductoisomerase (NADP(+)) (335 aa).

The KARI N-terminal Rossmann domain maps to Ser-5–Thr-185. Residues Tyr-28–Gln-31, Ser-56, and Asp-86–Gln-89 each bind NADP(+). His-111 is an active-site residue. Gly-137 contributes to the NADP(+) binding site. One can recognise a KARI C-terminal knotted domain in the interval Thr-186 to Gly-331. Residues Asp-194, Glu-198, Glu-230, and Glu-234 each contribute to the Mg(2+) site. Ser-255 lines the substrate pocket.

The protein belongs to the ketol-acid reductoisomerase family. Requires Mg(2+) as cofactor.

It carries out the reaction (2R)-2,3-dihydroxy-3-methylbutanoate + NADP(+) = (2S)-2-acetolactate + NADPH + H(+). The catalysed reaction is (2R,3R)-2,3-dihydroxy-3-methylpentanoate + NADP(+) = (S)-2-ethyl-2-hydroxy-3-oxobutanoate + NADPH + H(+). The protein operates within amino-acid biosynthesis; L-isoleucine biosynthesis; L-isoleucine from 2-oxobutanoate: step 2/4. Its pathway is amino-acid biosynthesis; L-valine biosynthesis; L-valine from pyruvate: step 2/4. In terms of biological role, involved in the biosynthesis of branched-chain amino acids (BCAA). Catalyzes an alkyl-migration followed by a ketol-acid reduction of (S)-2-acetolactate (S2AL) to yield (R)-2,3-dihydroxy-isovalerate. In the isomerase reaction, S2AL is rearranged via a Mg-dependent methyl migration to produce 3-hydroxy-3-methyl-2-ketobutyrate (HMKB). In the reductase reaction, this 2-ketoacid undergoes a metal-dependent reduction by NADPH to yield (R)-2,3-dihydroxy-isovalerate. In Saccharolobus islandicus (strain L.S.2.15 / Lassen #1) (Sulfolobus islandicus), this protein is Ketol-acid reductoisomerase (NADP(+)).